The chain runs to 459 residues: Probable ECA polymerase (459 aa).

Transmembrane regions (helical) follow at residues 3 to 23, 37 to 57, 65 to 85, 119 to 139, 154 to 174, 181 to 201, 206 to 226, 227 to 247, 340 to 360, 377 to 397, and 409 to 429; these read LTQF…ILTL, IFFS…TCLL, VVPV…YGIY, LASV…FLLF, GVAL…VYFL, WLFF…VVGG, IIIA…ITLW, MLVT…LKRY, LVVM…GLII, YKAA…IVLA, and VFFC…YWLF.

This sequence belongs to the WzyE family. As to quaternary structure, probably part of a complex composed of WzxE, WzyE and WzzE.

Its subcellular location is the cell inner membrane. It functions in the pathway bacterial outer membrane biogenesis; enterobacterial common antigen biosynthesis. Its function is as follows. Probably involved in the polymerization of enterobacterial common antigen (ECA) trisaccharide repeat units. In Photorhabdus laumondii subsp. laumondii (strain DSM 15139 / CIP 105565 / TT01) (Photorhabdus luminescens subsp. laumondii), this protein is Probable ECA polymerase.